Here is a 430-residue protein sequence, read N- to C-terminus: Asparagine--tRNA ligase (430 aa).

It belongs to the class-II aminoacyl-tRNA synthetase family. As to quaternary structure, homodimer.

The protein resides in the cytoplasm. The catalysed reaction is tRNA(Asn) + L-asparagine + ATP = L-asparaginyl-tRNA(Asn) + AMP + diphosphate + H(+). The chain is Asparagine--tRNA ligase from Staphylococcus haemolyticus (strain JCSC1435).